Reading from the N-terminus, the 339-residue chain is MSLPQTYKRAVFKELGHPLTVEDAPLKLPGPNELLIKVEACGVCYSDMYSQYNGLGGGFPIVPGHEIIGKVAVVGSEVRDWNVGQRIGAGWHGGHDGTCKACKQGYFQMCDSTAVNGATKEGGYAEYTLIRSESAVHIPANVDAASYAPILCAGLTVFNSIRNVNIRAGETVAVQGLGGLGHLAIQYAKRMGYRVVAISRGPEKEAAARELGADEYIDSNEGDSGEQLAALGGAALAVTTASTGEAITPLLKGLGILGKLLVLSFPSNLTLEPTDLLKYGLSVHFWPSGHPSDAEDAVRFAENTNIASVVEKFPLEQAQQAFESMLSGKVRFRAVITMD.

Cys-44, His-65, Glu-66, Cys-99, Cys-102, Cys-110, and Cys-152 together coordinate Zn(2+). His-65 lines the an alcohol pocket. Residues 176 to 181 (GLGGLG), 196 to 201 (VAISRG), Lys-204, 263 to 265 (LSF), 287 to 289 (PSG), and 295 to 297 (EDA) each bind NAD(+).

Belongs to the zinc-containing alcohol dehydrogenase family. The cofactor is Zn(2+).

The enzyme catalyses a primary alcohol + NAD(+) = an aldehyde + NADH + H(+). It carries out the reaction a secondary alcohol + NAD(+) = a ketone + NADH + H(+). Its function is as follows. Alcohol dehydrogenase; part of the gene cluster that mediates the biosynthesis of notoamide, a fungal indole alkaloid that belongs to a family of natural products containing a characteristic bicyclo[2.2.2]diazaoctane core. The first step of notoamide biosynthesis involves coupling of L-proline and L-tryptophan by the bimodular NRPS notE, to produce cyclo-L-tryptophan-L-proline called brevianamide F. The reverse prenyltransferase notF then acts as a deoxybrevianamide E synthase and converts brevianamide F to deoxybrevianamide E via reverse prenylation at C-2 of the indole ring leading to the bicyclo[2.2.2]diazaoctane core. Deoxybrevianamide E is further hydroxylated at C-6 of the indole ring, likely catalyzed by the cytochrome P450 monooxygenase notG, to yield 6-hydroxy-deoxybrevianamide E. 6-hydroxy-deoxybrevianamide E is a specific substrate of the prenyltransferase notC for normal prenylation at C-7 to produce 6-hydroxy-7-prenyl-deoxybrevianamide, also called notoamide S. As the proposed pivotal branching point in notoamide biosynthesis, notoamide S can be diverted to notoamide E through an oxidative pyran ring closure putatively catalyzed by either notH cytochrome P450 monooxygenase or the notD FAD-linked oxidoreductase. This step would be followed by an indole 2,3-epoxidation-initiated pinacol-like rearrangement catalyzed by the notB FAD-dependent monooxygenase leading to the formation of notoamide C and notoamide D. On the other hand notoamide S is converted to notoamide T by notH (or notD), a bifunctional oxidase that also functions as the intramolecular Diels-Alderase responsible for generation of (+)-notoamide T. To generate antipodal (-)-notoaminide T, notH' (or notD') in Aspergillus versicolor is expected to catalyze a Diels-Alder reaction leading to the opposite stereochemistry. The remaining oxidoreductase notD (or notH) likely catalyzes the oxidative pyran ring formation to yield (+)-stephacidin A. The FAD-dependent monooxygenase notI is highly similar to notB and is predicted to catalyze a similar conversion from (+)-stephacidin A to (-)-notoamide B via the 2,3-epoxidation of (+)-stephacidin A followed by a pinacol-type rearrangement. Finally, it remains unclear which enzyme could be responsible for the final hydroxylation steps leading to notoamide A and sclerotiamide. The function of notN in the notoamide biosynthesis has not been determined yet. The protein is Alcohol dehydrogenase notN of Aspergillus sp. (strain MF297-2).